The chain runs to 120 residues: MSSFKSEYPFEKRKAESERICSQFENRVPVICERAEKSDIPEVDRRKYLVPADLTVGQFVYVIRRRIKLPAEKAIFIFVNDTLPPTAALMFAVYQEHKDKDGFLYVKYSGENTFGSEENQ.

A lipid anchor (Phosphatidylethanolamine amidated glycine) is attached at glycine 115. Residues serine 116–glutamine 120 constitute a propeptide, removed in mature form.

This sequence belongs to the ATG8 family. In terms of processing, the C-terminal 5 residues are removed by ATG4 to expose Gly-115 at the C-terminus. The C-terminal Gly is then amidated with phosphatidylethanolamine by an activating system similar to that for ubiquitin.

The protein localises to the cytoplasmic vesicle. Its subcellular location is the autophagosome membrane. It localises to the vacuole membrane. Functionally, ubiquitin-like modifier involved in autophagosome formation. With ATG4, mediates the delivery of the autophagosomes to the vacuole via the microtubule cytoskeleton. Required for selective autophagic degradation of the nucleus (nucleophagy) as well as for mitophagy which contributes to regulate mitochondrial quantity and quality by eliminating the mitochondria to a basal level to fulfill cellular energy requirements and preventing excess ROS production. Participates also in membrane fusion events that take place in the early secretory pathway. Also involved in endoplasmic reticulum-specific autophagic process and is essential for the survival of cells subjected to severe ER stress. The ATG8-PE conjugate mediates tethering between adjacent membranes and stimulates membrane hemifusion, leading to expansion of the autophagosomal membrane during autophagy. In Eremothecium gossypii (strain ATCC 10895 / CBS 109.51 / FGSC 9923 / NRRL Y-1056) (Yeast), this protein is Autophagy-related protein 8 (ATG8).